The chain runs to 162 residues: Ribosome maturation factor RimM (162 aa).

One can recognise a PRC barrel domain in the interval 86–160 (EGRYYYFALI…SIHVDPIPGL (75 aa)).

The protein belongs to the RimM family. In terms of assembly, binds ribosomal protein uS19.

It localises to the cytoplasm. In terms of biological role, an accessory protein needed during the final step in the assembly of 30S ribosomal subunit, possibly for assembly of the head region. Essential for efficient processing of 16S rRNA. May be needed both before and after RbfA during the maturation of 16S rRNA. It has affinity for free ribosomal 30S subunits but not for 70S ribosomes. This is Ribosome maturation factor RimM from Thermus thermophilus (strain ATCC 27634 / DSM 579 / HB8).